Reading from the N-terminus, the 545-residue chain is Probable bifunctional tRNA threonylcarbamoyladenosine biosynthesis protein (545 aa).

Residues 1–329 form a kae1 region; the sequence is MKNTFILGIE…YRTDDVKVTW (329 aa). 3 residues coordinate Fe cation: His-113, His-117, and Tyr-134. L-threonylcarbamoyladenylate-binding positions include 134-138, Asp-166, Gly-179, Glu-183, and Asn-262; that span reads YVSGA. Asp-290 lines the Fe cation pocket. The Protein kinase domain maps to 340–545; sequence EISPGTSLKL…EEIKKRARYA (206 aa). ATP contacts are provided by residues 353 to 361 and Lys-375; that span reads LDNGAEAIV. The active-site Proton acceptor; for kinase activity is Asp-462.

In the N-terminal section; belongs to the KAE1 / TsaD family. The protein in the C-terminal section; belongs to the protein kinase superfamily. Tyr protein kinase family. BUD32 subfamily. Component of the KEOPS complex that consists of Kae1, Bud32, Cgi121 and Pcc1; the whole complex dimerizes. Requires Fe(2+) as cofactor.

It is found in the cytoplasm. The catalysed reaction is L-seryl-[protein] + ATP = O-phospho-L-seryl-[protein] + ADP + H(+). It catalyses the reaction L-threonyl-[protein] + ATP = O-phospho-L-threonyl-[protein] + ADP + H(+). It carries out the reaction L-threonylcarbamoyladenylate + adenosine(37) in tRNA = N(6)-L-threonylcarbamoyladenosine(37) in tRNA + AMP + H(+). In terms of biological role, required for the formation of a threonylcarbamoyl group on adenosine at position 37 (t(6)A37) in tRNAs that read codons beginning with adenine. Is a component of the KEOPS complex that is probably involved in the transfer of the threonylcarbamoyl moiety of threonylcarbamoyl-AMP (TC-AMP) to the N6 group of A37. The Kae1 domain likely plays a direct catalytic role in this reaction. The Bud32 domain probably displays kinase activity that regulates Kae1 function. This is Probable bifunctional tRNA threonylcarbamoyladenosine biosynthesis protein from Methanosarcina barkeri (strain Fusaro / DSM 804).